Consider the following 614-residue polypeptide: Numb-like protein (614 aa).

Disordered stretches follow at residues 1–68 (MSRS…QWQA), 223–283 (GSFR…PVAA), 371–420 (FASA…LEEV), 448–468 (QQQQ…LQPF), and 539–614 (LGKA…EIEL). The 150-residue stretch at 74–223 (RKGTCSFPVR…ASRTSFAREG (150 aa)) folds into the PID domain. 2 positions are modified to phosphoserine: Ser224 and Ser228. The span at 233 to 245 (PAEREAGDKKKAE) shows a compositional bias: basic and acidic residues. Positions 246–260 (AAAAPAVAPGPAQPG) are enriched in low complexity. Position 263 is a phosphoserine (Ser263). Position 279 is a phosphothreonine (Thr279). Residues 371-390 (FASAGAPVPGPPSATTGTSA) are compositionally biased toward low complexity. Positions 409–418 (TPSEAERWLE) are enriched in basic and acidic residues. The residue at position 411 (Ser411) is a Phosphoserine. Residues 563-578 (NGAPWPPEPAPAPAPE) are compositionally biased toward pro residues.

Associates with EPS15 and NOTCH1. Interacts (via PTB domain) with MAP3K7IP2 (via C-terminal). Interacts (via C-terminal) with TRAF6 (via TRAF domains).

It localises to the cytoplasm. Plays a role in the process of neurogenesis. Required throughout embryonic neurogenesis to maintain neural progenitor cells, also called radial glial cells (RGCs), by allowing their daughter cells to choose progenitor over neuronal cell fate. Not required for the proliferation of neural progenitor cells before the onset of embryonic neurogenesis. Also required postnatally in the subventricular zone (SVZ) neurogenesis by regulating SVZ neuroblasts survival and ependymal wall integrity. Negative regulator of NF-kappa-B signaling pathway. The inhibition of NF-kappa-B activation is mediated at least in part, by preventing MAP3K7IP2 to interact with polyubiquitin chains of TRAF6 and RIPK1 and by stimulating the 'Lys-48'-linked polyubiquitination and degradation of TRAF6 in cortical neurons. The polypeptide is Numb-like protein (Numbl) (Rattus norvegicus (Rat)).